The following is a 231-amino-acid chain: Sugar fermentation stimulation protein homolog (231 aa).

This sequence belongs to the SfsA family.

The chain is Sugar fermentation stimulation protein homolog from Geotalea uraniireducens (strain Rf4) (Geobacter uraniireducens).